We begin with the raw amino-acid sequence, 411 residues long: DNA polymerase IV (411 aa).

The UmuC domain occupies 18–211; the sequence is VVHVDMDCFY…LDVADLHGVG (194 aa). Residues aspartate 22 and aspartate 130 each contribute to the Mg(2+) site. Glutamate 131 is an active-site residue. Disordered regions lie at residues 248–280 and 376–411; these read FHRR…GATE and GFSG…DEFT. Basic and acidic residues predominate over residues 253–274; the sequence is RGADSRPVEPRGKPKSLSRESS. A compositionally biased stretch (gly residues) spans 384–402; the sequence is DGGGHEGGACGGAGRGSCG.

This sequence belongs to the DNA polymerase type-Y family. Monomer. The cofactor is Mg(2+).

It is found in the cytoplasm. It carries out the reaction DNA(n) + a 2'-deoxyribonucleoside 5'-triphosphate = DNA(n+1) + diphosphate. Its function is as follows. Poorly processive, error-prone DNA polymerase involved in untargeted mutagenesis. Copies undamaged DNA at stalled replication forks, which arise in vivo from mismatched or misaligned primer ends. These misaligned primers can be extended by PolIV. Exhibits no 3'-5' exonuclease (proofreading) activity. May be involved in translesional synthesis. This Halobacterium salinarum (strain ATCC 29341 / DSM 671 / R1) protein is DNA polymerase IV.